The following is a 158-amino-acid chain: HVA22-like protein f (158 aa).

Transmembrane regions (helical) follow at residues 2–22 (GFII…VMLL), 41–61 (QQWL…LSVW), and 63–83 (VLAW…WLVL).

It belongs to the DP1 family.

Its subcellular location is the membrane. This is HVA22-like protein f (HVA22F) from Arabidopsis thaliana (Mouse-ear cress).